The primary structure comprises 72 residues: MGRVKIKVVKRTALELFKRYPDIWTKDFEKNKKLVQALLKKVSKKFRNQIAGYLVRLVKFKEQNKLPIQYLR.

It belongs to the eukaryotic ribosomal protein eS17 family.

The polypeptide is Small ribosomal subunit protein eS17 (Nanoarchaeum equitans (strain Kin4-M)).